A 397-amino-acid chain; its full sequence is Tryptophan synthase beta chain (397 aa).

Position 88 is an N6-(pyridoxal phosphate)lysine (lysine 88).

This sequence belongs to the TrpB family. Tetramer of two alpha and two beta chains. Requires pyridoxal 5'-phosphate as cofactor.

The enzyme catalyses (1S,2R)-1-C-(indol-3-yl)glycerol 3-phosphate + L-serine = D-glyceraldehyde 3-phosphate + L-tryptophan + H2O. It participates in amino-acid biosynthesis; L-tryptophan biosynthesis; L-tryptophan from chorismate: step 5/5. Functionally, the beta subunit is responsible for the synthesis of L-tryptophan from indole and L-serine. This Shewanella amazonensis (strain ATCC BAA-1098 / SB2B) protein is Tryptophan synthase beta chain.